Here is a 585-residue protein sequence, read N- to C-terminus: Protein DENND6B (585 aa).

In terms of domain architecture, uDENN spans 43-214 (ECVCVVTFDL…LPVMGVVVQV (172 aa)). Residues 246–373 (VHELDLFRCF…VKLKKPSRLK (128 aa)) form the cDENN domain. Residues 375 to 499 (LDTKPGLYTA…KSPHFDGWYR (125 aa)) enclose the dDENN domain.

This sequence belongs to the DENND6 family.

The protein localises to the recycling endosome. It is found in the cytoplasm. Its function is as follows. Guanine nucleotide exchange factor (GEF) for RAB14. Also has some, lesser GEF activity towards RAB35. This chain is Protein DENND6B (DENND6B), found in Homo sapiens (Human).